The chain runs to 253 residues: Glucosamine-6-phosphate deaminase (253 aa).

The active-site Proton acceptor; for enolization step is the Asp-65. The For ring-opening step role is filled by Asn-133. His-135 functions as the Proton acceptor; for ring-opening step in the catalytic mechanism. Residue Glu-140 is the For ring-opening step of the active site.

This sequence belongs to the glucosamine/galactosamine-6-phosphate isomerase family. NagB subfamily.

It carries out the reaction alpha-D-glucosamine 6-phosphate + H2O = beta-D-fructose 6-phosphate + NH4(+). It functions in the pathway amino-sugar metabolism; N-acetylneuraminate degradation; D-fructose 6-phosphate from N-acetylneuraminate: step 5/5. Its function is as follows. Catalyzes the reversible isomerization-deamination of glucosamine 6-phosphate (GlcN6P) to form fructose 6-phosphate (Fru6P) and ammonium ion. The chain is Glucosamine-6-phosphate deaminase from Corynebacterium glutamicum (strain ATCC 13032 / DSM 20300 / JCM 1318 / BCRC 11384 / CCUG 27702 / LMG 3730 / NBRC 12168 / NCIMB 10025 / NRRL B-2784 / 534).